A 282-amino-acid chain; its full sequence is Bifunctional protein FolD (282 aa).

NADP(+) is bound by residues 166 to 168 (GRS) and Ser-191.

The protein belongs to the tetrahydrofolate dehydrogenase/cyclohydrolase family. Homodimer.

It catalyses the reaction (6R)-5,10-methylene-5,6,7,8-tetrahydrofolate + NADP(+) = (6R)-5,10-methenyltetrahydrofolate + NADPH. The catalysed reaction is (6R)-5,10-methenyltetrahydrofolate + H2O = (6R)-10-formyltetrahydrofolate + H(+). It participates in one-carbon metabolism; tetrahydrofolate interconversion. In terms of biological role, catalyzes the oxidation of 5,10-methylenetetrahydrofolate to 5,10-methenyltetrahydrofolate and then the hydrolysis of 5,10-methenyltetrahydrofolate to 10-formyltetrahydrofolate. The chain is Bifunctional protein FolD from Acidovorax ebreus (strain TPSY) (Diaphorobacter sp. (strain TPSY)).